The primary structure comprises 211 residues: Vascular-related unknown protein 1 (211 aa).

The segment covering 1–12 has biased composition (polar residues); it reads MMDTFSCNSYEQ. The segment at 1 to 40 is disordered; that stretch reads MMDTFSCNSYEQNHPHDDDIDIDAHDHDSHGGDHQEESGW. The span at 13–37 shows a compositional bias: basic and acidic residues; that stretch reads NHPHDDDIDIDAHDHDSHGGDHQEE.

In terms of tissue distribution, expressed in vascular tissues of cotyledons, rosette leaves, sepals, petals, anther filaments. Expressed in roots, inflorescence stems and developing seeds.

It is found in the cytoplasm. The protein resides in the nucleus. Its function is as follows. Involved in the regulation of xylem development and growth. May regulate secondary wall formation during vascular development by modulation of brassinosteroid, gibberellin and auxin hormone signaling pathways. The protein is Vascular-related unknown protein 1 of Arabidopsis thaliana (Mouse-ear cress).